The primary structure comprises 331 residues: Biotin synthase (331 aa).

Positions 52-277 (PDVEVEGIIS…RTMLRFAGGR (226 aa)) constitute a Radical SAM core domain. Cys67, Cys71, and Cys74 together coordinate [4Fe-4S] cluster. 4 residues coordinate [2Fe-2S] cluster: Cys110, Cys143, Cys202, and Arg272.

This sequence belongs to the radical SAM superfamily. Biotin synthase family. In terms of assembly, homodimer. [4Fe-4S] cluster is required as a cofactor. The cofactor is [2Fe-2S] cluster.

The enzyme catalyses (4R,5S)-dethiobiotin + (sulfur carrier)-SH + 2 reduced [2Fe-2S]-[ferredoxin] + 2 S-adenosyl-L-methionine = (sulfur carrier)-H + biotin + 2 5'-deoxyadenosine + 2 L-methionine + 2 oxidized [2Fe-2S]-[ferredoxin]. It functions in the pathway cofactor biosynthesis; biotin biosynthesis; biotin from 7,8-diaminononanoate: step 2/2. In terms of biological role, catalyzes the conversion of dethiobiotin (DTB) to biotin by the insertion of a sulfur atom into dethiobiotin via a radical-based mechanism. This is Biotin synthase from Mycobacterium sp. (strain JLS).